Consider the following 322-residue polypeptide: TATA box-binding protein-associated factor RNA polymerase I subunit D (322 aa).

Disordered stretches follow at residues 1-70 (MAQS…SIEP) and 82-116 (FKKKKRKKRKKRKYEPKLRPRGRPRGKPSGTRITR). S23 carries the phosphoserine modification. The span at 82–107 (FKKKKRKKRKKRKYEPKLRPRGRPRG) shows a compositional bias: basic residues. Phosphoserine is present on S137. The tract at residues 198–219 (YMDDDGSLSPIEEPLTEDEATN) is disordered. S232 carries the post-translational modification Phosphoserine. Residues 257–267 (FSKKAKDATHR) show a composition bias toward basic and acidic residues. Residues 257 to 276 (FSKKAKDATHREKGHRRTLK) are disordered.

As to quaternary structure, component of the transcription factor SL1/TIF-IB complex, composed of TBP and at least TAF1A, TAF1B, TAF1C and TAF1D. Interacts with UBTF.

The protein localises to the nucleus. Functionally, component of the transcription factor SL1/TIF-IB complex, which is involved in the assembly of the PIC (preinitiation complex) during RNA polymerase I-dependent transcription. The rate of PIC formation probably is primarily dependent on the rate of association of SL1/TIF-IB with the rDNA promoter. SL1/TIF-IB is involved in stabilization of nucleolar transcription factor 1/UBTF on rDNA. Formation of SL1/TIF-IB excludes the association of TBP with TFIID subunits. In Mus musculus (Mouse), this protein is TATA box-binding protein-associated factor RNA polymerase I subunit D (Taf1d).